The sequence spans 93 residues: 3-isopropylmalate dehydratase small subunit (93 aa).

It belongs to the LeuD family. LeuD type 1 subfamily. Heterodimer of LeuC and LeuD.

The enzyme catalyses (2R,3S)-3-isopropylmalate = (2S)-2-isopropylmalate. It participates in amino-acid biosynthesis; L-leucine biosynthesis; L-leucine from 3-methyl-2-oxobutanoate: step 2/4. Functionally, catalyzes the isomerization between 2-isopropylmalate and 3-isopropylmalate, via the formation of 2-isopropylmaleate. In Actinoplanes teichomyceticus, this protein is 3-isopropylmalate dehydratase small subunit (leuD).